A 204-amino-acid chain; its full sequence is dITP/XTP pyrophosphatase (204 aa).

Position 14–19 (14–19 (THNKGK)) interacts with substrate. Mg(2+)-binding residues include Glu-46 and Asp-75. The Proton acceptor role is filled by Asp-75. Substrate-binding positions include Ser-76, 161–164 (FGYD), Lys-184, and 189–190 (HR).

The protein belongs to the HAM1 NTPase family. Homodimer. Mg(2+) is required as a cofactor.

It carries out the reaction XTP + H2O = XMP + diphosphate + H(+). The catalysed reaction is dITP + H2O = dIMP + diphosphate + H(+). The enzyme catalyses ITP + H2O = IMP + diphosphate + H(+). Its function is as follows. Pyrophosphatase that catalyzes the hydrolysis of nucleoside triphosphates to their monophosphate derivatives, with a high preference for the non-canonical purine nucleotides XTP (xanthosine triphosphate), dITP (deoxyinosine triphosphate) and ITP. Seems to function as a house-cleaning enzyme that removes non-canonical purine nucleotides from the nucleotide pool, thus preventing their incorporation into DNA/RNA and avoiding chromosomal lesions. The chain is dITP/XTP pyrophosphatase from Ruegeria pomeroyi (strain ATCC 700808 / DSM 15171 / DSS-3) (Silicibacter pomeroyi).